We begin with the raw amino-acid sequence, 138 residues long: L-ectoine synthase (138 aa).

The protein belongs to the ectoine synthase family.

It carries out the reaction (2S)-4-acetamido-2-aminobutanoate = L-ectoine + H2O. Its pathway is amine and polyamine biosynthesis; ectoine biosynthesis; L-ectoine from L-aspartate 4-semialdehyde: step 3/3. Catalyzes the circularization of gamma-N-acetyl-alpha,gamma-diaminobutyric acid (ADABA) to ectoine (1,4,5,6-tetrahydro-2-methyl-4-pyrimidine carboxylic acid), which is an excellent osmoprotectant. The polypeptide is L-ectoine synthase (Vibrio cholerae serotype O1 (strain ATCC 39541 / Classical Ogawa 395 / O395)).